Reading from the N-terminus, the 159-residue chain is Eukaryotic translation initiation factor 5A-2 (159 aa).

A compositionally biased stretch (basic and acidic residues) spans 1 to 10 (MSDDEHHFEA). A disordered region spans residues 1–25 (MSDDEHHFEASESGASKTYPQSAGN). A Phosphoserine modification is found at Ser-2. Positions 13–24 (SGASKTYPQSAG) are enriched in polar residues. Lys-51 bears the Hypusine mark.

The protein belongs to the eIF-5A family. As to quaternary structure, homodimer. Interacts with AHK4 and AHP1. Cytokinin regulates the formation of the AHP1-AHK4-ELF5A-2 complex. Lys-51 undergoes hypusination, a unique post-translational modification that consists in the addition of a butylamino group from spermidine to lysine side chain, leading to the formation of the unusual amino acid hypusine. eIF-5As are the only known proteins to undergo this modification, which is essential for their function. In terms of tissue distribution, ubiquitous. In roots, expressed mostly inside the stele of the mature zone.

It localises to the cytoplasm. It is found in the nucleus. Translation factor that promotes translation elongation and termination, particularly upon ribosome stalling at specific amino acid sequence contexts. Binds between the exit (E) and peptidyl (P) site of the ribosome and promotes rescue of stalled ribosome: specifically required for efficient translation of polyproline-containing peptides as well as other motifs that stall the ribosome. Acts as a ribosome quality control (RQC) cofactor by joining the RQC complex to facilitate peptidyl transfer during CAT tailing step. Regulates cytokinin-mediated root protoxylem specification and represses secifically the expression of AHP6. Regulates the induction of programmed cell death caused by infection with virulent pathogen. The sequence is that of Eukaryotic translation initiation factor 5A-2 (ELF5A-2) from Arabidopsis thaliana (Mouse-ear cress).